The chain runs to 1078 residues: Teashirt homolog 1-A (1078 aa).

Disordered stretches follow at residues 1-110, 140-197, and 271-300; these read MPRR…NVSY, KSNE…SNSA, and GHYRDDNKDRDAERTKRWSKPRKRSLMEME. The segment covering 26–36 has biased composition (acidic residues); that stretch reads IEEDNLEDDGL. Over residues 57–71 the composition is skewed to polar residues; sequence PSYQNSPISSATNQD. The segment covering 143–197 has biased composition (low complexity); the sequence is ENSSPTTNTNKSSMSEATGSTSDPDTPTTIPSSSCTNTSTSISVTTSNSTNSNSA. C2H2-type zinc fingers lie at residues 248-272 and 309-333; these read FKCKDCSAAYDTLVELTVHMNETGH and LKCMYCGHSFESLQDLSVHMIKTKH. Over residues 271 to 286 the composition is skewed to basic and acidic residues; the sequence is GHYRDDNKDRDAERTK. Positions 365-394 are disordered; sequence DSPEQAGISPGASVSESAKDPKAANPYVTP. Residues 418–442 form a C2H2-type 3 zinc finger; that stretch reads LKCMECGSSHDSLQQLTAHMMVTGH. 2 disordered regions span residues 472–524 and 850–877; these read LPPT…ENED and RLTPKSSTPSTVSEKSDADGSSFEEAMD. Residues 497 to 524 are compositionally biased toward basic and acidic residues; sequence HSEEKKDPEKEKVNNCEVEKRIKEENED. The span at 853–862 shows a compositional bias: polar residues; sequence PKSSTPSTVS. A DNA-binding region (homeobox) is located at residues 885-955; the sequence is RKGRQSNWNP…NVKYQLRRTG (71 aa). 2 C2H2-type zinc fingers span residues 970 to 992 and 1038 to 1061; these read FFCNDCASQFRTASTYIGHLETH and FQCKLCNRTFASKHAVKLHLSKTH.

This sequence belongs to the teashirt C2H2-type zinc-finger protein family.

The protein resides in the nucleus. Probable transcriptional regulator involved in developmental processes. May act as a transcriptional repressor (Potential). Involved in two major neuronal regionalization processes: primary anteroposterior (AP) axis patterning of the CNS and segmentation of the cranial neuronal crest (CNS) development. The polypeptide is Teashirt homolog 1-A (tshz1-a) (Xenopus laevis (African clawed frog)).